Reading from the N-terminus, the 426-residue chain is Dihydroorotase (426 aa).

Residues histidine 58 and histidine 60 each coordinate Zn(2+). Substrate is bound by residues histidine 60–arginine 62 and asparagine 92. Zn(2+) contacts are provided by aspartate 150, histidine 177, and histidine 230. Substrate is bound at residue asparagine 276. Zn(2+) is bound at residue aspartate 303. The active site involves aspartate 303. Residues histidine 307 and phenylalanine 321–glycine 322 each bind substrate.

The protein belongs to the metallo-dependent hydrolases superfamily. DHOase family. Class I DHOase subfamily. It depends on Zn(2+) as a cofactor.

The enzyme catalyses (S)-dihydroorotate + H2O = N-carbamoyl-L-aspartate + H(+). The protein operates within pyrimidine metabolism; UMP biosynthesis via de novo pathway; (S)-dihydroorotate from bicarbonate: step 3/3. Catalyzes the reversible cyclization of carbamoyl aspartate to dihydroorotate. This is Dihydroorotase from Listeria innocua serovar 6a (strain ATCC BAA-680 / CLIP 11262).